We begin with the raw amino-acid sequence, 565 residues long: Oxygen-dependent choline dehydrogenase (565 aa).

Residue 6–35 coordinates FAD; that stretch reads DYIIVGAGSAGNTLATRLTEDASVSVLLLE. The disordered stretch occupies residues 182 to 203; the sequence is QQEGFGPMDRSVTKKGRRSSTA. The active-site Proton acceptor is the H475.

The protein belongs to the GMC oxidoreductase family. It depends on FAD as a cofactor.

It catalyses the reaction choline + A = betaine aldehyde + AH2. The enzyme catalyses betaine aldehyde + NAD(+) + H2O = glycine betaine + NADH + 2 H(+). Its pathway is amine and polyamine biosynthesis; betaine biosynthesis via choline pathway; betaine aldehyde from choline (cytochrome c reductase route): step 1/1. Functionally, involved in the biosynthesis of the osmoprotectant glycine betaine. Catalyzes the oxidation of choline to betaine aldehyde and betaine aldehyde to glycine betaine at the same rate. This is Oxygen-dependent choline dehydrogenase from Pseudomonas entomophila (strain L48).